Consider the following 30-residue polypeptide: Conotoxin Bt12.1 (30 aa).

Post-translationally, contains 3 disulfide bonds. Expressed by the venom duct.

The protein localises to the secreted. This is Conotoxin Bt12.1 from Conus betulinus (Beech cone).